The chain runs to 472 residues: Tubulin gamma chain (472 aa).

Residue 142 to 148 (AGGTGSG) coordinates GTP.

The protein belongs to the tubulin family.

The protein resides in the cytoplasm. It is found in the cytoskeleton. Its subcellular location is the microtubule organizing center. Its function is as follows. Tubulin is the major constituent of microtubules. The gamma chain is found at microtubule organizing centers (MTOC) such as the spindle poles, suggesting that it is involved in the minus-end nucleation of microtubule assembly. The chain is Tubulin gamma chain (TUBG) from Anemia phyllitidis (Fern).